We begin with the raw amino-acid sequence, 179 residues long: UPF0227 protein Shewana3_2292 (179 aa).

Belongs to the UPF0227 family.

The protein is UPF0227 protein Shewana3_2292 of Shewanella sp. (strain ANA-3).